A 251-amino-acid polypeptide reads, in one-letter code: Cell division protein ZapD (251 aa).

Belongs to the ZapD family. Interacts with FtsZ.

The protein resides in the cytoplasm. Its function is as follows. Cell division factor that enhances FtsZ-ring assembly. Directly interacts with FtsZ and promotes bundling of FtsZ protofilaments, with a reduction in FtsZ GTPase activity. The sequence is that of Cell division protein ZapD from Burkholderia cenocepacia (strain ATCC BAA-245 / DSM 16553 / LMG 16656 / NCTC 13227 / J2315 / CF5610) (Burkholderia cepacia (strain J2315)).